Consider the following 177-residue polypeptide: Large ribosomal subunit protein uL6 (177 aa).

It belongs to the universal ribosomal protein uL6 family. Part of the 50S ribosomal subunit.

Its function is as follows. This protein binds to the 23S rRNA, and is important in its secondary structure. It is located near the subunit interface in the base of the L7/L12 stalk, and near the tRNA binding site of the peptidyltransferase center. This chain is Large ribosomal subunit protein uL6, found in Rickettsia africae (strain ESF-5).